A 339-amino-acid chain; its full sequence is D-erythrose-4-phosphate dehydrogenase (339 aa).

Position 12-13 (12-13 (RI)) interacts with NAD(+). Substrate is bound by residues 154–156 (SCT), Arg-200, 213–214 (TK), and Arg-236. Residue Cys-155 is the Nucleophile of the active site. Asn-318 is a binding site for NAD(+).

This sequence belongs to the glyceraldehyde-3-phosphate dehydrogenase family. Epd subfamily. As to quaternary structure, homotetramer.

The protein resides in the cytoplasm. It carries out the reaction D-erythrose 4-phosphate + NAD(+) + H2O = 4-phospho-D-erythronate + NADH + 2 H(+). The protein operates within cofactor biosynthesis; pyridoxine 5'-phosphate biosynthesis; pyridoxine 5'-phosphate from D-erythrose 4-phosphate: step 1/5. In terms of biological role, catalyzes the NAD-dependent conversion of D-erythrose 4-phosphate to 4-phosphoerythronate. The polypeptide is D-erythrose-4-phosphate dehydrogenase (Photorhabdus laumondii subsp. laumondii (strain DSM 15139 / CIP 105565 / TT01) (Photorhabdus luminescens subsp. laumondii)).